The following is a 122-amino-acid chain: MARIAGVNIPTAKRVPIALTYIHGIGNHVAEQICDAVGIDRARRVNQLSDAEVLAIREYIDANVTVEGDLRRETSMNIKRLMDLGCYRGLRHRRGLPVRGQRTHTNARTRKGPAKAIAGKKK.

Residues 99 to 122 (RGQRTHTNARTRKGPAKAIAGKKK) form a disordered region.

Belongs to the universal ribosomal protein uS13 family. In terms of assembly, part of the 30S ribosomal subunit. Forms a loose heterodimer with protein S19. Forms two bridges to the 50S subunit in the 70S ribosome.

Its function is as follows. Located at the top of the head of the 30S subunit, it contacts several helices of the 16S rRNA. In the 70S ribosome it contacts the 23S rRNA (bridge B1a) and protein L5 of the 50S subunit (bridge B1b), connecting the 2 subunits; these bridges are implicated in subunit movement. Contacts the tRNAs in the A and P-sites. This is Small ribosomal subunit protein uS13 from Cereibacter sphaeroides (strain ATCC 17025 / ATH 2.4.3) (Rhodobacter sphaeroides).